A 147-amino-acid polypeptide reads, in one-letter code: UPF0251 protein NT01CX_1491 (147 aa).

Belongs to the UPF0251 family.

The protein is UPF0251 protein NT01CX_1491 of Clostridium novyi (strain NT).